Consider the following 378-residue polypeptide: Queuine tRNA-ribosyltransferase (378 aa).

D89 acts as the Proton acceptor in catalysis. Substrate-binding positions include 89-93 (DSGGF), D143, Q194, and G221. Residues 252–258 (GVGTPAN) form an RNA binding region. D271 functions as the Nucleophile in the catalytic mechanism. Zn(2+)-binding residues include C309, C311, C314, and H340.

It belongs to the queuine tRNA-ribosyltransferase family. In terms of assembly, homodimer. Within each dimer, one monomer is responsible for RNA recognition and catalysis, while the other monomer binds to the replacement base PreQ1. It depends on Zn(2+) as a cofactor.

The enzyme catalyses 7-aminomethyl-7-carbaguanine + guanosine(34) in tRNA = 7-aminomethyl-7-carbaguanosine(34) in tRNA + guanine. It participates in tRNA modification; tRNA-queuosine biosynthesis. Catalyzes the base-exchange of a guanine (G) residue with the queuine precursor 7-aminomethyl-7-deazaguanine (PreQ1) at position 34 (anticodon wobble position) in tRNAs with GU(N) anticodons (tRNA-Asp, -Asn, -His and -Tyr). Catalysis occurs through a double-displacement mechanism. The nucleophile active site attacks the C1' of nucleotide 34 to detach the guanine base from the RNA, forming a covalent enzyme-RNA intermediate. The proton acceptor active site deprotonates the incoming PreQ1, allowing a nucleophilic attack on the C1' of the ribose to form the product. After dissociation, two additional enzymatic reactions on the tRNA convert PreQ1 to queuine (Q), resulting in the hypermodified nucleoside queuosine (7-(((4,5-cis-dihydroxy-2-cyclopenten-1-yl)amino)methyl)-7-deazaguanosine). This chain is Queuine tRNA-ribosyltransferase, found in Lachnospira eligens (strain ATCC 27750 / DSM 3376 / VPI C15-48 / C15-B4) (Eubacterium eligens).